Consider the following 536-residue polypeptide: Chaperonin GroEL 2 (536 aa).

Residues 29-32 (TLGP), 86-90 (DGTTT), Gly-413, 476-478 (NAA), and Asp-492 contribute to the ATP site.

Belongs to the chaperonin (HSP60) family. In terms of assembly, forms a cylinder of 14 subunits composed of two heptameric rings stacked back-to-back. Interacts with the co-chaperonin GroES.

The protein localises to the cytoplasm. It catalyses the reaction ATP + H2O + a folded polypeptide = ADP + phosphate + an unfolded polypeptide.. Its function is as follows. Together with its co-chaperonin GroES, plays an essential role in assisting protein folding. The GroEL-GroES system forms a nano-cage that allows encapsulation of the non-native substrate proteins and provides a physical environment optimized to promote and accelerate protein folding. The polypeptide is Chaperonin GroEL 2 (Moorella thermoacetica (strain ATCC 39073 / JCM 9320)).